A 355-amino-acid chain; its full sequence is MDVQSEEFRGAQAQIWSQSCSFITSASLKCAVKLGIPDTIDNHGKPITLSELTNALVPPVHPSKAPFIYRLMRVLAKNGFCSEEQLDGETEPLYSLTPSSRILLKKEPLNLRGIVLTMADPVQLKAWESLSDWYQNEDDSSTAFETAHGKNFWGYSSEHMEHAEFFNEAMASDSQLISKLLIGEYKFLFEGLASLVDIGGGTGTIAKAIAKNFPQLKCTVFDLPHVVANLESKENVEFVAGDMFEKIPSANAIFLKWILHDWNDEDCVKILKSCKKAIPAKGGKVIIIDMVMYSDKKDDHLVKTQTSMDMAMLVNFAAKERCEKEWAFLFKEAGFSDYKIYPKLDFTRSLIEVYP.

S-adenosyl-L-methionine is bound by residues 198–201 (IGGG), D222, 222–223 (DL), 242–243 (DM), and K256. H260 serves as the catalytic Proton acceptor.

It belongs to the class I-like SAM-binding methyltransferase superfamily. Cation-independent O-methyltransferase family. COMT subfamily. In terms of assembly, homodimer. Expressed in leaves and flowers. Detected in stems and roots. In leaves, expressed in epidermal cells.

It is found in the cytoplasm. It carries out the reaction 16-hydroxytabersonine + S-adenosyl-L-methionine = 16-methoxytabersonine + S-adenosyl-L-homocysteine + H(+). The protein operates within alkaloid biosynthesis; vindoline biosynthesis. 16-O-methyltransferase involved in the biosynthesis of vindoline. Highly specific for 16-hydroxytabersonine. No activity with tabersonine, 3-hydroxytyramine, 4-hydroxytyramine, 5-hydroxytryptamine (5HT), 2,3-dihydro-3-hydroxytabersonine, lochnericine, hoerhammericine, 16-hydroxy-2,3-dihydro-3-hydroxytabersonine, 16-hydroxylochnericine, 16-hydroxyhoerhammericine, quercetin, kaempferol and caffeic acid as substrates. The protein is Tabersonine 16-O-methyltransferase of Catharanthus roseus (Madagascar periwinkle).